The following is a 122-amino-acid chain: Large ribosomal subunit protein uL14 (122 aa).

The protein belongs to the universal ribosomal protein uL14 family. As to quaternary structure, part of the 50S ribosomal subunit. Forms a cluster with proteins L3 and L19. In the 70S ribosome, L14 and L19 interact and together make contacts with the 16S rRNA in bridges B5 and B8.

Binds to 23S rRNA. Forms part of two intersubunit bridges in the 70S ribosome. In Thermosipho africanus (strain TCF52B), this protein is Large ribosomal subunit protein uL14.